We begin with the raw amino-acid sequence, 556 residues long: Polypyrimidine tract-binding protein 1 (556 aa).

Methionine 1 bears the N-acetylmethionine mark. Serine 16 carries the phosphoserine modification. A disordered region spans residues 35–54 (ASAANGNDSKKFKGDNRSTG). RRM domains lie at 58-142 (RVIH…SSPN), 183-259 (LRII…FSKL), and 362-436 (SVLL…LSKH). Residue lysine 64 forms a Glycyl lysine isopeptide (Lys-Gly) (interchain with G-Cter in SUMO2) linkage. Phosphotyrosine is present on tyrosine 126. At threonine 137 the chain carries Phosphothreonine. Residue serine 140 is modified to Phosphoserine. Lysine 217 is covalently cross-linked (Glycyl lysine isopeptide (Lys-Gly) (interchain with G-Cter in SUMO2)). A disordered region spans residues 436-458 (HQSVQLPREGQEDQGLTKDYGSS). Phosphoserine is present on serine 458. Residues 479–554 (ATLHLSNIPP…HHLRVSFSKS (76 aa)) enclose the RRM 4 domain.

As to quaternary structure, monomer. Part of a ternary complex containing KHSRP, PTBP1, PTBP2 and HNRPH1. Interacts with RAVER1 and SFPQ.

The protein resides in the nucleus. Its function is as follows. Plays a role in pre-mRNA splicing and in the regulation of alternative splicing events. Activates exon skipping of its own pre-mRNA during muscle cell differentiation. Binds to the polypyrimidine tract of introns. May promote RNA looping when bound to two separate polypyrimidine tracts in the same pre-mRNA. May promote the binding of U2 snRNP to pre-mRNA. Cooperates with RAVER1 to modulate switching between mutually exclusive exons during maturation of the TPM1 pre-mRNA. Represses the splicing of MAPT/Tau exon 10. Binds to polypyrimidine-rich controlling element (PCE) of CFTR and promotes exon skipping of CFTR exon 9, thereby antagonizing TIA1 and its role in exon inclusion of CFTR exon 9. Plays a role in the splicing of pyruvate kinase PKM by binding repressively to a polypyrimidine tract flanking PKM exon 9, inhibiting exon 9 inclusion and resulting in exon 10 inclusion and production of the PKM M2 isoform. The chain is Polypyrimidine tract-binding protein 1 (Ptbp1) from Rattus norvegicus (Rat).